The following is a 283-amino-acid chain: Putative sugar uptake protein BA_0200/GBAA_0200/BAS0200 (283 aa).

10 helical membrane-spanning segments follow: residues 4-21, 26-48, 52-71, 84-106, 110-132, 151-173, 178-195, 208-230, 234-253, and 260-279; these read LLAL…LVSV, GAYS…MYVF, ALTM…WALG, VSTT…GVIA, WTTT…GVVF, LLTL…WYNI, AILP…VLTS, ALSG…RVGV, FPLS…VFLG, and QLIF…VLLG.

The protein belongs to the GRP transporter (TC 2.A.7.5) family.

The protein resides in the cell membrane. This Bacillus anthracis protein is Putative sugar uptake protein BA_0200/GBAA_0200/BAS0200.